The sequence spans 288 residues: Fibroblast growth factor 2 (288 aa).

Residues 1–133 are disordered; it reads MVGVGGGDVE…RGSRPGPAGT (133 aa). Residues 1-142 constitute a propeptide, or 93, or 124, or 125, or 131, or 161; sequence MVGVGGGDVE…TMAAGSITTL (142 aa). The span at 52-64 shows a compositional bias: low complexity; sequence SVNPRSRAAGSPR. Residues 68 to 84 are compositionally biased toward basic and acidic residues; the sequence is RRTEERPSGSRLGDRGR. Omega-N-methylarginine; alternate is present on residues Arg108, Arg110, and Arg112. A symmetric dimethylarginine; alternate mark is found at Arg108, Arg110, and Arg112. Positions 113–132 are enriched in low complexity; it reads GTAAPRAAPAARGSRPGPAG. Residue Asn169 participates in heparin binding. Positions 179–181 match the Cell attachment site; atypical motif; sequence DGR. Tyr215 carries the post-translational modification Phosphotyrosine; by TEC. The Cell attachment site; atypical motif lies at 221–223; sequence DGR. Lys228 is covalently cross-linked (Glycyl lysine isopeptide (Lys-Gly) (interchain with G-Cter in SUMO1)). Positions 261-277 are heparin-binding; sequence KRTGQYKLGSKTGPGQK.

This sequence belongs to the heparin-binding growth factors family. In terms of assembly, monomer. Homodimer. Interacts with FGFR1, FGFR2, FGFR3 and FGFR4. Affinity between fibroblast growth factors (FGFs) and their receptors is increased by heparan sulfate glycosaminoglycans that function as coreceptors. Interacts with CSPG4, FGFBP1 and TEC. Found in a complex with FGFBP1, FGF1 and FGF2. Interacts with FGFBP3. Interacts with integrin ITGAV:ITGB3; the interaction is required for FGF2 signaling. Interacts with SNORC (via the extracellular domain). Interacts with glypican GPC3. Post-translationally, phosphorylation at Tyr-215 regulates FGF2 unconventional secretion. Several N-termini starting at positions 94, 125, 126, 132, 143 and 162 have been identified by direct sequencing. In terms of tissue distribution, expressed in granulosa and cumulus cells. Expressed in hepatocellular carcinoma cells, but not in non-cancerous liver tissue.

It localises to the secreted. It is found in the nucleus. In terms of biological role, acts as a ligand for FGFR1, FGFR2, FGFR3 and FGFR4. Also acts as an integrin ligand which is required for FGF2 signaling. Binds to integrin ITGAV:ITGB3. Plays an important role in the regulation of cell survival, cell division, cell differentiation and cell migration. Functions as a potent mitogen in vitro. Can induce angiogenesis. Mediates phosphorylation of ERK1/2 and thereby promotes retinal lens fiber differentiation. The protein is Fibroblast growth factor 2 (FGF2) of Homo sapiens (Human).